The following is a 176-amino-acid chain: T cell receptor beta constant 1 (176 aa).

In terms of domain architecture, Ig-like C1-type spans 8–117; that stretch reads PEVAVFEPSE…WTQDRAKPVT (110 aa). Cysteine 30 and cysteine 95 are joined by a disulfide. Asparagine 69 carries N-linked (GlcNAc...) asparagine glycosylation. The tract at residues 130–144 is connecting peptide; that stretch reads CGFTSVSYQQGVLSA. Residues 150–170 traverse the membrane as a helical segment; the sequence is ILLGKATLYAVLVSALVLMAM. Residues 171-176 are Cytoplasmic-facing; that stretch reads VKRKDF.

As to quaternary structure, alpha-beta TR is a heterodimer composed of an alpha and beta chain; disulfide-linked. The alpha-beta TR is associated with the transmembrane signaling CD3 coreceptor proteins to form the TR-CD3 (TcR or TCR). The assembly of alpha-beta TR heterodimers with CD3 occurs in the endoplasmic reticulum where a single alpha-beta TR heterodimer associates with one CD3D-CD3E heterodimer, one CD3G-CD3E heterodimer and one CD247 homodimer forming a stable octameric structure. CD3D-CD3E and CD3G-CD3E heterodimers preferentially associate with TR alpha and TR beta chains, respectively. The association of the CD247 homodimer is the last step of TcR assembly in the endoplasmic reticulum and is required for transport to the cell surface.

The protein resides in the cell membrane. In terms of biological role, constant region of T cell receptor (TR) beta chain. Alpha-beta T cell receptors are antigen specific receptors which are essential to the immune response and are present on the cell surface of T lymphocytes. Recognize peptide-major histocompatibility (MH) (pMH) complexes that are displayed by antigen presenting cells (APC), a prerequisite for efficient T cell adaptive immunity against pathogens. Binding of alpha-beta TR to pMH complex initiates TR-CD3 clustering on the cell surface and intracellular activation of LCK that phosphorylates the ITAM motifs of CD3G, CD3D, CD3E and CD247 enabling the recruitment of ZAP70. In turn, ZAP70 phosphorylates LAT, which recruits numerous signaling molecules to form the LAT signalosome. The LAT signalosome propagates signal branching to three major signaling pathways, the calcium, the mitogen-activated protein kinase (MAPK) kinase and the nuclear factor NF-kappa-B (NF-kB) pathways, leading to the mobilization of transcription factors that are critical for gene expression and essential for T cell growth and differentiation. The T cell repertoire is generated in the thymus, by V-(D)-J rearrangement. This repertoire is then shaped by intrathymic selection events to generate a peripheral T cell pool of self-MH restricted, non-autoaggressive T cells. Post-thymic interaction of alpha-beta TR with the pMH complexes shapes TR structural and functional avidity. This chain is T cell receptor beta constant 1, found in Homo sapiens (Human).